Reading from the N-terminus, the 518-residue chain is Calcium and calcium/calmodulin-dependent serine/threonine-protein kinase (518 aa).

The 288-residue stretch at 13–300 (YEISEILGRG…AQELLSHPWV (288 aa)) folds into the Protein kinase domain. ATP contacts are provided by residues 19–27 (LGRGGFSVV) and K44. Residue D165 is the Proton acceptor of the active site. At T265 the chain carries Phosphothreonine. The segment at 323–336 (ARRKLRAAAIASVW) is calmodulin-binding. A coiled-coil region spans residues 344–365 (TKKLRSLVGTYDLKEEEIESLR). EF-hand domains follow at residues 394 to 429 (SLIP…LKNS), 430 to 465 (KGDD…LPEE), and 472 to 507 (TEPG…DSSL). Residues D407, N409, D411, T413, E418, D443, D445, S447, C449, E454, D485, N487, D489, K491, and E496 each coordinate Ca(2+).

The protein belongs to the protein kinase superfamily. CAMK Ser/Thr protein kinase family. CaMK subfamily. In terms of assembly, interacts with IPD3. Interacts with CIP73. In terms of processing, autophosphorylation stimulated by calcium. Occurs probably by an intermolecular mechanism. Mainly expressed in roots and nodules. Detected in leaves, stems and cotyledons.

It localises to the nucleus. The catalysed reaction is L-seryl-[protein] + ATP = O-phospho-L-seryl-[protein] + ADP + H(+). The enzyme catalyses L-threonyl-[protein] + ATP = O-phospho-L-threonyl-[protein] + ADP + H(+). Its activity is regulated as follows. Activated by calcium/calmodulin binding after calcium-induced autophosphorylation. In terms of biological role, calcium- and calmodulin-dependent protein kinase necessary and sufficient for dedifferentiation of root cortical cells into nodule initials. Not required for calcium spiking. Acts as central regulator of the nodule organogenesis program. Required for root hair curling and infection thread (IT) formation upon rhizobial infection, and arbuscule formation during arbuscular mycorrhiza (AM) fungal infection. Phosphorylates the downstream target IPD3, a protein required for root infection by symbiotic rhizobia and AM fungi. Phosphorylates the downstream target CIP73, a protein required for root nodule organogenesis. Mediates the phosphorylation of leghemoglobins (e.g. LB1) to modulate their oxygen O(2) affinity, thus regulating the diffusion of oxygen to the bacteroids in nodules. The chain is Calcium and calcium/calmodulin-dependent serine/threonine-protein kinase from Lotus japonicus (Lotus corniculatus var. japonicus).